We begin with the raw amino-acid sequence, 1292 residues long: HMG domain-containing protein 3 (1292 aa).

Positions 42–110 form a DNA-binding region, HMG box; it reads TKKPRSAYLL…GLDPNSKLSA (69 aa). 3 disordered regions span residues 363-391, 448-505, and 562-588; these read SKGS…KLTL, VQPE…GRAR, and KQLG…NRTS. Positions 370 to 391 are enriched in polar residues; that stretch reads RNQQPVTTEQNSSKENASKLTL. Residues 467 to 478 show a composition bias toward low complexity; that stretch reads PTPSEGTSTSSP. A compositionally biased stretch (polar residues) spans 562-572; that stretch reads KQLGQPIQQPS.

The protein resides in the nucleus. This is HMG domain-containing protein 3 from Homo sapiens (Human).